Reading from the N-terminus, the 231-residue chain is MNEVSTGASALRLEGLTRRFRSGEETLEILSGAEFELRAGEIVALVAPSGTGKSTLLHLAGLLEAPSAGTVFVADRPASGLSDTVRTAIRRDQIGFVYQFHHLLGEFTACENVMLPQLIAGVSPRKARERARDLLGRFGLSHRLDSLPGRLSGGEQQRTAIARALANQPKLLLADEPTGNLDIGTADHVFGELLRVVREEGAAALIATHNDELASRMDRTVTLRDGKLVPF.

The ABC transporter domain occupies 11–231 (LRLEGLTRRF…TLRDGKLVPF (221 aa)). 47–54 (APSGTGKS) contributes to the ATP binding site.

Belongs to the ABC transporter superfamily. Lipoprotein translocase (TC 3.A.1.125) family. In terms of assembly, the complex is composed of two ATP-binding proteins (LolD) and two transmembrane proteins (LolC and LolE).

Its subcellular location is the cell inner membrane. In terms of biological role, part of the ABC transporter complex LolCDE involved in the translocation of mature outer membrane-directed lipoproteins, from the inner membrane to the periplasmic chaperone, LolA. Responsible for the formation of the LolA-lipoprotein complex in an ATP-dependent manner. The protein is Lipoprotein-releasing system ATP-binding protein LolD of Gluconobacter oxydans (strain 621H) (Gluconobacter suboxydans).